Here is a 106-residue protein sequence, read N- to C-terminus: NADH dehydrogenase [ubiquinone] iron-sulfur protein 5 (106 aa).

In terms of domain architecture, CHCH spans 30-74; that stretch reads AGRCHAFEKEWIECAHGIGYTRAEKECKIEYDDFVECLLRQKTMR. 2 short sequence motifs (cx9C motif) span residues 33-43 and 56-66; these read CHAFEKEWIEC and CKIEYDDFVEC. 2 disulfides stabilise this stretch: Cys-33/Cys-66 and Cys-43/Cys-56. A disordered region spans residues 84–106; the sequence is DKLIKEGKYTPPPHHIGKGEPRP.

This sequence belongs to the complex I NDUFS5 subunit family. As to quaternary structure, mammalian complex I is composed of 45 different subunits. This is a component of the iron-sulfur (IP) fragment of the enzyme.

Its subcellular location is the mitochondrion inner membrane. The protein resides in the mitochondrion intermembrane space. In terms of biological role, accessory subunit of the mitochondrial membrane respiratory chain NADH dehydrogenase (Complex I), that is believed not to be involved in catalysis. Complex I functions in the transfer of electrons from NADH to the respiratory chain. The immediate electron acceptor for the enzyme is believed to be ubiquinone. The chain is NADH dehydrogenase [ubiquinone] iron-sulfur protein 5 (NDUFS5) from Homo sapiens (Human).